The primary structure comprises 297 residues: GTPase Era (297 aa).

Residues 5–173 enclose the Era-type G domain; that stretch reads RAGFVSFVGR…TTELMRLLPV (169 aa). The interval 13–20 is G1; that stretch reads GRPNVGKS. 13–20 provides a ligand contact to GTP; the sequence is GRPNVGKS. Residues 39 to 43 are G2; sequence QTTRR. The interval 60 to 63 is G3; sequence DTPG. GTP is bound by residues 60-64 and 123-126; these read DTPGV and TKID. A G4 region spans residues 123-126; that stretch reads TKID. The G5 stretch occupies residues 152–154; it reads VSA. One can recognise a KH type-2 domain in the interval 205-283; the sequence is VEDELPHSLA…FLSIRVKVAK (79 aa).

This sequence belongs to the TRAFAC class TrmE-Era-EngA-EngB-Septin-like GTPase superfamily. Era GTPase family. In terms of assembly, monomer.

Its subcellular location is the cytoplasm. It localises to the cell membrane. In terms of biological role, an essential GTPase that binds both GDP and GTP, with rapid nucleotide exchange. Plays a role in 16S rRNA processing and 30S ribosomal subunit biogenesis and possibly also in cell cycle regulation and energy metabolism. In Leifsonia xyli subsp. xyli (strain CTCB07), this protein is GTPase Era.